Consider the following 804-residue polypeptide: Leucine--tRNA ligase (804 aa).

The short motif at 40–51 is the 'HIGH' region element; the sequence is PYPSGAGLHVGH. Residues 576-580 carry the 'KMSKS' region motif; it reads KMSKS. Lysine 579 lines the ATP pocket.

Belongs to the class-I aminoacyl-tRNA synthetase family.

Its subcellular location is the cytoplasm. The enzyme catalyses tRNA(Leu) + L-leucine + ATP = L-leucyl-tRNA(Leu) + AMP + diphosphate. The sequence is that of Leucine--tRNA ligase from Staphylococcus saprophyticus subsp. saprophyticus (strain ATCC 15305 / DSM 20229 / NCIMB 8711 / NCTC 7292 / S-41).